A 371-amino-acid polypeptide reads, in one-letter code: o-succinylbenzoate synthase (371 aa).

K164 acts as the Proton donor in catalysis. 3 residues coordinate Mg(2+): D189, E214, and D239. K263 (proton acceptor) is an active-site residue.

This sequence belongs to the mandelate racemase/muconate lactonizing enzyme family. MenC type 2 subfamily. The cofactor is a divalent metal cation.

It carries out the reaction (1R,6R)-6-hydroxy-2-succinyl-cyclohexa-2,4-diene-1-carboxylate = 2-succinylbenzoate + H2O. It participates in quinol/quinone metabolism; 1,4-dihydroxy-2-naphthoate biosynthesis; 1,4-dihydroxy-2-naphthoate from chorismate: step 4/7. Its pathway is quinol/quinone metabolism; menaquinone biosynthesis. In terms of biological role, converts 2-succinyl-6-hydroxy-2,4-cyclohexadiene-1-carboxylate (SHCHC) to 2-succinylbenzoate (OSB). Does not show detectable N-acylamino acid racemase (NAAAR) activity with N-acetyl-S-methionine as substrate. The sequence is that of o-succinylbenzoate synthase from Bacillus subtilis (strain 168).